The following is a 750-amino-acid chain: Photosystem I P700 chlorophyll a apoprotein A1 (750 aa).

8 consecutive transmembrane segments (helical) span residues 70–93, 156–179, 195–219, 291–309, 346–369, 385–411, 433–455, and 531–549; these read VFSA…FHGA, LYCT…FHYH, LNHH…HVSL, IAHH…GHMY, WHAQ…HHMY, LSLF…IFMV, AIIS…LYIH, and FLVH…LILL. [4Fe-4S] cluster-binding residues include Cys-573 and Cys-582. 2 consecutive transmembrane segments (helical) span residues 589–610 and 664–686; these read HVFL…HFSW and LSAY…MFLF. His-675 is a binding site for chlorophyll a'. Positions 683 and 691 each coordinate chlorophyll a. Phylloquinone is bound at residue Trp-692. A helical membrane pass occupies residues 724 to 744; sequence AVGVTHYLLGGIATTWAFFLA.

Belongs to the PsaA/PsaB family. The PsaA/B heterodimer binds the P700 chlorophyll special pair and subsequent electron acceptors. PSI consists of a core antenna complex that captures photons, and an electron transfer chain that converts photonic excitation into a charge separation. The eukaryotic PSI reaction center is composed of at least 11 subunits. The cofactor is P700 is a chlorophyll a/chlorophyll a' dimer, A0 is one or more chlorophyll a, A1 is one or both phylloquinones and FX is a shared 4Fe-4S iron-sulfur center..

The protein resides in the plastid. It localises to the chloroplast thylakoid membrane. It carries out the reaction reduced [plastocyanin] + hnu + oxidized [2Fe-2S]-[ferredoxin] = oxidized [plastocyanin] + reduced [2Fe-2S]-[ferredoxin]. Its function is as follows. PsaA and PsaB bind P700, the primary electron donor of photosystem I (PSI), as well as the electron acceptors A0, A1 and FX. PSI is a plastocyanin-ferredoxin oxidoreductase, converting photonic excitation into a charge separation, which transfers an electron from the donor P700 chlorophyll pair to the spectroscopically characterized acceptors A0, A1, FX, FA and FB in turn. Oxidized P700 is reduced on the lumenal side of the thylakoid membrane by plastocyanin. The sequence is that of Photosystem I P700 chlorophyll a apoprotein A1 from Populus trichocarpa (Western balsam poplar).